Consider the following 455-residue polypeptide: Probable xyloglucan galactosyltransferase GT17 (455 aa).

Over 1-34 (MTFNKRQVKINHWPEKNDKEKQKYSKNRETVKLT) the chain is Cytoplasmic. The chain crosses the membrane as a helical; Signal-anchor for type II membrane protein span at residues 35 to 55 (LLTLLLLCSICFLFLTLNFPF). At 56–455 (TIEFTASIPR…QARDNVVVSL (400 aa)) the chain is on the lumenal side. Residues Asn-70, Asn-169, Asn-230, Asn-390, and Asn-426 are each glycosylated (N-linked (GlcNAc...) asparagine).

This sequence belongs to the glycosyltransferase 47 family. As to expression, expressed in roots and hypocotyls.

It is found in the golgi apparatus membrane. In terms of biological role, functions in xyloglucan synthesis by adding side chains to the xylosylated glucan backbone. Involved in the galactosylation of hemicellulose xyloglucan. The protein is Probable xyloglucan galactosyltransferase GT17 of Arabidopsis thaliana (Mouse-ear cress).